We begin with the raw amino-acid sequence, 282 residues long: Pantothenate synthetase (282 aa).

ATP is bound at residue 30-37; that stretch reads MGYLHQGH. The active-site Proton donor is the H37. Residue Q61 participates in (R)-pantoate binding. Q61 provides a ligand contact to beta-alanine. 147–150 serves as a coordination point for ATP; the sequence is GQKD. Q153 is a (R)-pantoate binding site. ATP-binding positions include V176 and 184-187; that span reads MSSR.

It belongs to the pantothenate synthetase family. Homodimer.

It localises to the cytoplasm. The enzyme catalyses (R)-pantoate + beta-alanine + ATP = (R)-pantothenate + AMP + diphosphate + H(+). The protein operates within cofactor biosynthesis; (R)-pantothenate biosynthesis; (R)-pantothenate from (R)-pantoate and beta-alanine: step 1/1. In terms of biological role, catalyzes the condensation of pantoate with beta-alanine in an ATP-dependent reaction via a pantoyl-adenylate intermediate. The protein is Pantothenate synthetase of Geotalea daltonii (strain DSM 22248 / JCM 15807 / FRC-32) (Geobacter daltonii).